We begin with the raw amino-acid sequence, 1353 residues long: MTQEHNAAVLDLNPTFSTLIFFVNGKKVIDTNPDPECTLLTYLREKLRLCGTKLGCGEGGCGACTVMISRIDTLTNRIKHIAVNACLTPVCAMHGSAVTTVEGIGSTRTRLHPVQERLAKAHGSQCGFCTPGIVMSMYALLRNLSQPSMKDLEIAFQGNLCRCTGYRPILEGYKTFTKEFGCAMGDKCCKVNGNKCGEGMENGGDMVDDKLFEKSEFVPFDPSQEPIFPPELQLNKDWDSQTLVYKGERATWYRPGNLEDLLKIKAQFPEAKLVVGNTEIGVEVKFKHFLYPVLVNPTKVKEMIDVQELEDSIYFGASVSLMDIDRILRSSIEKLPEHQTRFFQCAVNMLHYFAGKQIRNVASLGGNIMTGSPISDMNPVLMAGAVKFKVAKYVEGQIKYREVCMASGFFTGYRKNVIEPTEILVGLYFPKTLEHQYVVAFKQAKRRDDDIAIVNAAINVFIDPRSITVDKVYMAFGGMAPTTVLATRTADIMVKQQWNKVLMERVVENLCAELPLAPSAPGGMIAYRRSLVVSLFFKAYLTITQQLIKSGILPQDSLPQEELSGSDVFHTPALKSAQLFEKVSNKQSECDPIGRPKIHASALKQATGEAIYCDDMPRMENELYLALVLSTKAHAKILSIDASEALAMPGVHAFFSSKDITQHENEVGPVFHDEEVFASDMVYCQGQVIGAIAADNPNFSSKTARKVTIEYEDIKPVIITIEQAIEHKSYFPDYPRFTEIGDVEKAFSEADHVYEGSCRMGGQEHFYLETHASLAVPRDSDEIEIFCSTQHPSEVQKLVAHVLSTSAHRVVCRAKRLGGGFGGKESRAIAVALPVALACHRLRRPIRCMLDRDEDMMITGTRHPFLFKYKIAFTSEGRLTGCYIECYNNAGWSMDLSFSVLERAMFHFENCYKIPNIKVGGWVCKTNLPSNTAFRGFGGPQGMFAGEHIIRDVARILGKDYLEIMKQNFYKEGDITHYQQKLDNFPIEKCFYDCLQQSNYYQKRKEIEEFNRNHRWRKRGISLVPTKYGIAFGVSHLNQAGALINIYADGSVLLSHGGVEIGQGLHTKMIQCCARALQIPIEFIHISETATDKVPNTSPTAASSGSDLNGMAVLDACEKLNKRLAPIKEANPNGSWTEWINKAYFERVSLSATGFYRMPDIGYDPVQNPNALMYNYFTNGVGSSIVEIDCLTGDHQVLSTDIVMDIGSSLNPAIDIGQIEGAFMQGYGLFTLEEMIYSPQGVLYSRGPGMYKLPGFADIPGEFNVTILTGAANPRAVYSSKAVGEPPLFIGCSVFFAIKEAITSARLMNGLSEDFKLESPATSARIRMACQDEFTNLIEQPPAGSYVPWNIVP.

One can recognise a 2Fe-2S ferredoxin-type domain in the interval 17–104 (STLIFFVNGK…GSAVTTVEGI (88 aa)). [2Fe-2S] cluster is bound by residues Cys-56, Cys-61, Cys-64, Cys-86, Cys-126, Cys-129, Cys-161, and Cys-163. Positions 245–434 (YKGERATWYR…VGLYFPKTLE (190 aa)) constitute an FAD-binding PCMH-type domain. Residues 273-280 (LVVGNTEI), Phe-353, 363-367 (SLGGN), Asp-376, Leu-424, and Lys-442 each bind FAD. Residues Gln-790 and Phe-821 each contribute to the Mo-molybdopterin site. 2 residues coordinate substrate: Glu-825 and Arg-903. Arg-935 is a binding site for Mo-molybdopterin. Substrate is bound at residue Phe-937. A Mo-molybdopterin-binding site is contributed by Ala-1102. Residue Glu-1285 is the Proton acceptor of the active site.

It belongs to the xanthine dehydrogenase family. As to quaternary structure, homodimer. The cofactor is FAD. Mo-molybdopterin is required as a cofactor. Requires [2Fe-2S] cluster as cofactor.

It is found in the peroxisome. The catalysed reaction is xanthine + NAD(+) + H2O = urate + NADH + H(+). It carries out the reaction hypoxanthine + NAD(+) + H2O = xanthine + NADH + H(+). In terms of biological role, key enzyme in purine degradation. Catalyzes the oxidation of hypoxanthine to xanthine. Catalyzes the oxidation of xanthine to uric acid. This is Xanthine dehydrogenase (XDH) from Calliphora vicina (Blue blowfly).